Here is a 143-residue protein sequence, read N- to C-terminus: Ribonuclease P protein component 2 (143 aa).

Belongs to the eukaryotic/archaeal RNase P protein component 2 family. In terms of assembly, consists of a catalytic RNA component and at least 4-5 protein subunits.

It localises to the cytoplasm. It carries out the reaction Endonucleolytic cleavage of RNA, removing 5'-extranucleotides from tRNA precursor.. Its function is as follows. Part of ribonuclease P, a protein complex that generates mature tRNA molecules by cleaving their 5'-ends. The sequence is that of Ribonuclease P protein component 2 from Saccharolobus solfataricus (strain ATCC 35092 / DSM 1617 / JCM 11322 / P2) (Sulfolobus solfataricus).